Consider the following 670-residue polypeptide: tRNA 5-methylaminomethyl-2-thiouridine biosynthesis bifunctional protein MnmC (670 aa).

The tract at residues 1–245 (MKPIAIQPAS…KREMLTGALS (245 aa)) is tRNA (mnm(5)s(2)U34)-methyltransferase. The segment at 271-670 (VGGGIASALL…RKLLKGRAAS (400 aa)) is FAD-dependent cmnm(5)s(2)U34 oxidoreductase.

It in the N-terminal section; belongs to the methyltransferase superfamily. tRNA (mnm(5)s(2)U34)-methyltransferase family. This sequence in the C-terminal section; belongs to the DAO family. Requires FAD as cofactor.

It is found in the cytoplasm. It catalyses the reaction 5-aminomethyl-2-thiouridine(34) in tRNA + S-adenosyl-L-methionine = 5-methylaminomethyl-2-thiouridine(34) in tRNA + S-adenosyl-L-homocysteine + H(+). Functionally, catalyzes the last two steps in the biosynthesis of 5-methylaminomethyl-2-thiouridine (mnm(5)s(2)U) at the wobble position (U34) in tRNA. Catalyzes the FAD-dependent demodification of cmnm(5)s(2)U34 to nm(5)s(2)U34, followed by the transfer of a methyl group from S-adenosyl-L-methionine to nm(5)s(2)U34, to form mnm(5)s(2)U34. This Cronobacter sakazakii (strain ATCC BAA-894) (Enterobacter sakazakii) protein is tRNA 5-methylaminomethyl-2-thiouridine biosynthesis bifunctional protein MnmC.